The primary structure comprises 230 residues: Proteasome subunit alpha (230 aa).

This sequence belongs to the peptidase T1A family. The 20S proteasome core is composed of 14 alpha and 14 beta subunits that assemble into four stacked heptameric rings, resulting in a barrel-shaped structure. The two inner rings, each composed of seven catalytic beta subunits, are sandwiched by two outer rings, each composed of seven alpha subunits. The catalytic chamber with the active sites is on the inside of the barrel. Has a gated structure, the ends of the cylinder being occluded by the N-termini of the alpha-subunits. Is capped by the proteasome-associated ATPase, ARC.

It is found in the cytoplasm. The protein operates within protein degradation; proteasomal Pup-dependent pathway. Its activity is regulated as follows. The formation of the proteasomal ATPase ARC-20S proteasome complex, likely via the docking of the C-termini of ARC into the intersubunit pockets in the alpha-rings, may trigger opening of the gate for substrate entry. Interconversion between the open-gate and close-gate conformations leads to a dynamic regulation of the 20S proteasome proteolysis activity. In terms of biological role, component of the proteasome core, a large protease complex with broad specificity involved in protein degradation. This chain is Proteasome subunit alpha, found in Thermomonospora curvata (strain ATCC 19995 / DSM 43183 / JCM 3096 / KCTC 9072 / NBRC 15933 / NCIMB 10081 / Henssen B9).